The chain runs to 160 residues: Ribosomal RNA large subunit methyltransferase H (160 aa).

Residues Leu76, Gly108, and Leu127 to Trp132 each bind S-adenosyl-L-methionine.

The protein belongs to the RNA methyltransferase RlmH family. As to quaternary structure, homodimer.

The protein localises to the cytoplasm. The catalysed reaction is pseudouridine(1915) in 23S rRNA + S-adenosyl-L-methionine = N(3)-methylpseudouridine(1915) in 23S rRNA + S-adenosyl-L-homocysteine + H(+). Functionally, specifically methylates the pseudouridine at position 1915 (m3Psi1915) in 23S rRNA. This chain is Ribosomal RNA large subunit methyltransferase H, found in Rhizobium etli (strain ATCC 51251 / DSM 11541 / JCM 21823 / NBRC 15573 / CFN 42).